Reading from the N-terminus, the 293-residue chain is MPWIQLKLNTTGANAEDLSDALMEAGAVSITFQDTHDTPVFEPLPGETRLWGDTDVIGLFDAETDMNDVVAILENHPLLGAGFAHKIEQLEDKDWEREWMDNFHPMRFGERLWICPSWRDVPDENAVNVMLDPGLAFGTGTHPTTSLCLQWLDSLDLTGKTVIDFGCGSGILAIAALKLGAAKAIGIDIDPQAIQASRNNAERNGVSDRLELYLPKDQPEEMKADVVVANILAGPLRELAPLISVLPVSGGLLGLSGILASQAESVCEAYADSFALDPVVEKEEWCRITGRKN.

4 residues coordinate S-adenosyl-L-methionine: T145, G166, D188, and N230.

This sequence belongs to the methyltransferase superfamily. PrmA family.

Its subcellular location is the cytoplasm. The enzyme catalyses L-lysyl-[protein] + 3 S-adenosyl-L-methionine = N(6),N(6),N(6)-trimethyl-L-lysyl-[protein] + 3 S-adenosyl-L-homocysteine + 3 H(+). Functionally, methylates ribosomal protein L11. The sequence is that of Ribosomal protein L11 methyltransferase from Escherichia coli (strain 55989 / EAEC).